A 147-amino-acid chain; its full sequence is Hemoglobin subunit beta-2 (147 aa).

Positions 3–147 constitute a Globin domain; sequence HWTAEEKAAI…LVDGLSQGYN (145 aa). The heme b site is built by His64 and His93.

Belongs to the globin family. In terms of assembly, heterotetramer of two alpha chains and two beta chains. In terms of tissue distribution, red blood cells.

Its function is as follows. Involved in oxygen transport from the lung to the various peripheral tissues. The protein is Hemoglobin subunit beta-2 (hbb2) of Xenopus laevis (African clawed frog).